We begin with the raw amino-acid sequence, 957 residues long: Retinoblastoma-related protein 1 (957 aa).

The interval 369–569 (TPVSTAMTTA…EKGSSMYNSL (201 aa)) is domain A. Positions 369–808 (TPVSTAMTTA…NEVFIPTVKP (440 aa)) are pocket. Positions 570–677 (IVARPTLSAE…PAAGGETCAE (108 aa)) are spacer. Positions 678–808 (TGIGVFLSKI…NEVFIPTVKP (131 aa)) are domain B. The tract at residues 814 to 854 (GPGTSPNRNNEPKSGGDAASFPESPRLSRFPNLPDMSPKKV) is disordered.

This sequence belongs to the retinoblastoma protein (RB) family.

It localises to the nucleus. Functionally, regulator of biological processes that recruits a histone deacetylase to control gene transcription. May play a role in the entry into mitosis, negatively regulating the cell proliferation. Formation of stable complexes with geminiviridae replication-associated proteins may create a cellular environment which favors viral DNA replication. The protein is Retinoblastoma-related protein 1 (RBR1) of Triticum aestivum (Wheat).